Here is a 394-residue protein sequence, read N- to C-terminus: MTLRRLRKLQQKEEATAAPDLAGRAPDSEAARAAPTPSGPPAAAAPPGAPGDELYAALEDYHPAELYRALAVSGGTLPRRKGSGFRWKNFTQSPEQQRKVLTLEKGDNQTFGFEIQTYGLHHREEQRVEMVTFVCRVHESSPAQLAGLTPGDTIASVNGLNVEGIRHREIVDIIKASGNVLRLETLYGTSIRKAELEARLQYLKQTLYEKWGEYRSLMVQEQRLVHGLVVKDPSIYDTLESVRSCLYGAGLLPGSLPFGPLLAAPGGARGGSRRAKGDTDDAVYHTCFFGGAEPQALPPPPPPARAPGPGSAETPASVLCPAPRATLSRSASVRCAGPGGGGGGGAPGALWTEAREQALCGAGLRKTKYRSFRRRLLKFIPGLNRSLEEEESQL.

The tract at residues 1-51 (MTLRRLRKLQQKEEATAAPDLAGRAPDSEAARAAPTPSGPPAAAAPPGAPG) is disordered. Positions 37-49 (PSGPPAAAAPPGA) are enriched in pro residues. Threonine 76 is modified (phosphothreonine). Phosphoserine is present on serine 93. The PDZ domain occupies 100–189 (VLTLEKGDNQ…VLRLETLYGT (90 aa)). The interval 180–257 (VLRLETLYGT…GAGLLPGSLP (78 aa)) is interaction with PSCD3. Tyrosine 236 is subject to Phosphotyrosine. Arginine 269 bears the Omega-N-methylarginine mark. A disordered region spans residues 293 to 318 (EPQALPPPPPPARAPGPGSAETPASV). Positions 296–306 (ALPPPPPPARA) are enriched in pro residues. Serine 386 is modified (phosphoserine).

In terms of assembly, heteromer. Composed of TAMALIN, CYTH2 and at least one GRM1. Also interacts with CYTH3, GRM2, GRM3 and GRM5. As to expression, expressed in brain.

It localises to the cytoplasm. It is found in the perinuclear region. Its subcellular location is the cell membrane. The protein resides in the postsynaptic cell membrane. In terms of biological role, plays a role in intracellular trafficking and contributes to the macromolecular organization of group 1 metabotropic glutamate receptors (mGluRs) at synapses. In Rattus norvegicus (Rat), this protein is General receptor for phosphoinositides 1-associated scaffold protein.